Consider the following 127-residue polypeptide: Calcitonin receptor-stimulating peptide 1 (127 aa).

The first 25 residues, 1–25, serve as a signal peptide directing secretion; that stretch reads MGFWKFSPFLVLGILALYQVGFLQA. Positions 26 to 79 are excised as a propeptide; sequence APFRSALENPPDSGVRNEEELRLLLAAVMKDYMQMKTHELEQEQETEGSRVAVQ. A disulfide bridge links Cys83 with Cys88.

This sequence belongs to the calcitonin family.

Its subcellular location is the secreted. Its function is as follows. Stimulates cAMP production in porcine kidney cell line LLC-PK1 via the calcitonin receptor (CT) but not via the CT-like (CL) receptor. This is Calcitonin receptor-stimulating peptide 1 (CRSP1) from Canis lupus familiaris (Dog).